The chain runs to 325 residues: Short chain isoprenyl diphosphate synthase (325 aa).

Positions 44, 47, and 76 each coordinate isopentenyl diphosphate. Mg(2+) is bound by residues D83 and D87. R92 is a binding site for an all-trans-polyprenyl diphosphate. Isopentenyl diphosphate is bound at residue R93. Residues K173, T174, Q211, K228, and K238 each contribute to the an all-trans-polyprenyl diphosphate site.

The protein belongs to the FPP/GGPP synthase family. Homodimer. It depends on Mg(2+) as a cofactor.

It localises to the cytoplasm. This is Short chain isoprenyl diphosphate synthase (idsA) from Methanothermobacter thermautotrophicus (strain ATCC 29096 / DSM 1053 / JCM 10044 / NBRC 100330 / Delta H) (Methanobacterium thermoautotrophicum).